A 715-amino-acid chain; its full sequence is Bromodomain-containing protein DDB_G0278469 (715 aa).

Disordered stretches follow at residues 18 to 46 (EDNN…NRNA) and 186 to 425 (QQQK…ETKQ). Composition is skewed to low complexity over residues 20 to 45 (NNNN…PNRN), 186 to 204 (QQQK…PTAQ), 215 to 227 (LTAA…TTTT), 234 to 254 (TAPP…TTKK), and 261 to 281 (SKSN…TTIT). Residues 307–316 (KPKEQKKDIM) are compositionally biased toward basic and acidic residues. The stretch at 322-368 (SKKANTHEEKEEGESEEEEEEEEEEEEEEEEEEEEEQLEDKQKQTKT) forms a coiled coil. Positions 332 to 359 (EEGESEEEEEEEEEEEEEEEEEEEEEQL) are enriched in acidic residues. Residues 366–389 (TKTPISQNKSASSNIKPLSKTSKS) are compositionally biased toward polar residues. The segment covering 405-414 (KKITSTTVTR) has biased composition (low complexity). Positions 437–470 (KQQTQEEIEQELKLESIRKRIEQFINKFEKEIND) form a coiled coil. The 126-residue stretch at 474–599 (KDLDEGKRKI…IQFYKSLLET (126 aa)) folds into the Bromo domain. The segment at 653 to 715 (LVDEDEDECL…SEEEDQEATN (63 aa)) is disordered. Over residues 662–672 (LNNQNNPTTYD) the composition is skewed to polar residues. The span at 684–715 (QESDEESDEESDEESDEERDQLSEEEDQEATN) shows a compositional bias: acidic residues.

The polypeptide is Bromodomain-containing protein DDB_G0278469 (Dictyostelium discoideum (Social amoeba)).